A 244-amino-acid polypeptide reads, in one-letter code: Agamous-like MADS-box protein MADS3 (244 aa).

In terms of domain architecture, MADS-box spans 1–61 (MGRGRVELKR…GKLYEFGSAG (61 aa)). A K-box domain is found at 85 to 175 (TQSWYQEVSK…KLKLEAEGQS (91 aa)). The interval 180 to 206 (QGSWNPSTATAGNSSFPVHPSQSNPMD) is disordered. Residues 181–204 (GSWNPSTATAGNSSFPVHPSQSNP) show a composition bias toward polar residues.

As to expression, expressed in flowers and seeds.

The protein resides in the nucleus. Functionally, probable transcription factor involved in flower development. The sequence is that of Agamous-like MADS-box protein MADS3 from Vitis vinifera (Grape).